Consider the following 183-residue polypeptide: Ribosome rescue factor SmrB (183 aa).

The Smr domain occupies 98 to 173; it reads LDLHGLTQLQ…GDAALLVLIE (76 aa).

Belongs to the SmrB family. As to quaternary structure, associates with collided ribosomes, but not with correctly translating polysomes.

Its function is as follows. Acts as a ribosome collision sensor. Detects stalled/collided disomes (pairs of ribosomes where the leading ribosome is stalled and a second ribosome has collided with it) and endonucleolytically cleaves mRNA at the 5' boundary of the stalled ribosome. Stalled/collided disomes form a new interface (primarily via the 30S subunits) that binds SmrB. Cleaved mRNA becomes available for tmRNA ligation, leading to ribosomal subunit dissociation and rescue of stalled ribosomes. The polypeptide is Ribosome rescue factor SmrB (Salmonella arizonae (strain ATCC BAA-731 / CDC346-86 / RSK2980)).